The chain runs to 80 residues: Conotoxin SmIVB (80 aa).

The first 21 residues, methionine 1–serine 21, serve as a signal peptide directing secretion. Residues isoleucine 22 to arginine 38 constitute a propeptide that is removed on maturation. Proline 40 carries the 4-hydroxyproline modification. An O-linked (HexNAc...) serine glycan is attached at serine 45. 5 positions are modified to 4-hydroxyproline: proline 55, proline 60, proline 61, proline 70, and proline 72. Serine 75 is modified (serine amide). Residues glycine 76–histidine 80 constitute a propeptide that is removed on maturation.

The protein belongs to the conotoxin A superfamily. Post-translationally, contains 3 disulfide bonds. In terms of tissue distribution, expressed by the venom duct.

It localises to the secreted. In terms of biological role, neurotoxin with probable activity on sodium channel. Induces intense repetitive firing of the frog neuromuscular junction, leading to a tetanic contracture in muscle fiber (spastic paralysis). In vivo, shows the same effect as the whole venom when injected on fish prey. The polypeptide is Conotoxin SmIVB (Conus stercusmuscarum (Fly-specked cone)).